A 226-amino-acid polypeptide reads, in one-letter code: Leucyl/phenylalanyl-tRNA--protein transferase (226 aa).

This sequence belongs to the L/F-transferase family.

It is found in the cytoplasm. It catalyses the reaction N-terminal L-lysyl-[protein] + L-leucyl-tRNA(Leu) = N-terminal L-leucyl-L-lysyl-[protein] + tRNA(Leu) + H(+). The enzyme catalyses N-terminal L-arginyl-[protein] + L-leucyl-tRNA(Leu) = N-terminal L-leucyl-L-arginyl-[protein] + tRNA(Leu) + H(+). The catalysed reaction is L-phenylalanyl-tRNA(Phe) + an N-terminal L-alpha-aminoacyl-[protein] = an N-terminal L-phenylalanyl-L-alpha-aminoacyl-[protein] + tRNA(Phe). Functions in the N-end rule pathway of protein degradation where it conjugates Leu, Phe and, less efficiently, Met from aminoacyl-tRNAs to the N-termini of proteins containing an N-terminal arginine or lysine. The polypeptide is Leucyl/phenylalanyl-tRNA--protein transferase (Bradyrhizobium sp. (strain ORS 278)).